A 205-amino-acid polypeptide reads, in one-letter code: Thymidylate kinase (205 aa).

7–14 serves as a coordination point for ATP; sequence GIDGSGKT.

Belongs to the thymidylate kinase family.

It carries out the reaction dTMP + ATP = dTDP + ADP. Its function is as follows. Phosphorylation of dTMP to form dTDP in both de novo and salvage pathways of dTTP synthesis. This Wolbachia pipientis subsp. Culex pipiens (strain wPip) protein is Thymidylate kinase.